The sequence spans 444 residues: Protein translocase subunit SecY (444 aa).

The next 10 helical transmembrane spans lie at 24–44 (FFVI…IPGI), 77–97 (ILAL…LLTV), 123–143 (GTLV…PNMV), 153–173 (MFTL…MWLG), 181–201 (IGNG…PKAI), 215–235 (VLLL…VVFM), 269–289 (MAGV…GTLA), 318–338 (YVML…ALVF), 376–396 (LAGA…MVAW), and 400–420 (FYFG…FMAQ).

It belongs to the SecY/SEC61-alpha family. In terms of assembly, component of the Sec protein translocase complex. Heterotrimer consisting of SecY, SecE and SecG subunits. The heterotrimers can form oligomers, although 1 heterotrimer is thought to be able to translocate proteins. Interacts with the ribosome. Interacts with SecDF, and other proteins may be involved. Interacts with SecA.

The protein resides in the cell inner membrane. The central subunit of the protein translocation channel SecYEG. Consists of two halves formed by TMs 1-5 and 6-10. These two domains form a lateral gate at the front which open onto the bilayer between TMs 2 and 7, and are clamped together by SecE at the back. The channel is closed by both a pore ring composed of hydrophobic SecY resides and a short helix (helix 2A) on the extracellular side of the membrane which forms a plug. The plug probably moves laterally to allow the channel to open. The ring and the pore may move independently. This Vibrio cholerae serotype O1 (strain ATCC 39315 / El Tor Inaba N16961) protein is Protein translocase subunit SecY.